A 110-amino-acid polypeptide reads, in one-letter code: Putative UPF0377 protein YKL223W (110 aa).

This sequence belongs to the UPF0377 family.

This is Putative UPF0377 protein YKL223W from Saccharomyces cerevisiae (strain ATCC 204508 / S288c) (Baker's yeast).